We begin with the raw amino-acid sequence, 605 residues long: Glutamine--fructose-6-phosphate aminotransferase [isomerizing] (605 aa).

C2 serves as the catalytic Nucleophile; for GATase activity. The Glutamine amidotransferase type-2 domain occupies 2-216 (CGIVGIVGHQ…DGDWAVIGKT (215 aa)). SIS domains follow at residues 280-420 (DSDA…ARGT) and 454-595 (LSRE…VDQP). Catalysis depends on K600, which acts as the For Fru-6P isomerization activity.

It is found in the cytoplasm. The enzyme catalyses D-fructose 6-phosphate + L-glutamine = D-glucosamine 6-phosphate + L-glutamate. In terms of biological role, involved in the production of the root hair deformation (HAD) factor specifically on medicago. The sequence is that of Glutamine--fructose-6-phosphate aminotransferase [isomerizing] (nodM) from Rhizobium meliloti (Ensifer meliloti).